The chain runs to 309 residues: Olfactory receptor 1A1 (309 aa).

At 1 to 25 (MRENNQSSTLEFILLGVTGQQEQED) the chain is on the extracellular side. Asparagine 5 carries N-linked (GlcNAc...) asparagine glycosylation. A helical membrane pass occupies residues 26-49 (FFYILFLFIYPITLIGNLLIVLAI). Residues 50 to 57 (CSDVRLHN) are Cytoplasmic-facing. Residues 58-79 (PMYFLLANLSLVDIFFSSVTIP) form a helical membrane-spanning segment. The Extracellular segment spans residues 80-100 (KMLANHLLGSKSISFGGCLTQ). Cysteine 97 and cysteine 189 are joined by a disulfide. The helical transmembrane segment at 101 to 120 (MYFMIALGNTDSYILAAMAY) threads the bilayer. Residues 121-139 (DRAVAISRPLHYTTIMSPR) are Cytoplasmic-facing. The chain crosses the membrane as a helical span at residues 140–158 (SCIWLIAGSWVIGNANALP). Residues 159 to 195 (HTLLTASLSFCGNQEVANFYCDITPLLKLSCSDIHFH) are Extracellular-facing. Residues 196–218 (VKMMYLGVGIFSVPLLCIIVSYI) traverse the membrane as a helical segment. Over 219-235 (RVFSTVFQVPSTKGVLK) the chain is Cytoplasmic. The chain crosses the membrane as a helical span at residues 236–258 (AFSTCGSHLTVVSLYYGTVMGTY). At 259-270 (FRPLTNYSLKDA) the chain is on the extracellular side. Asparagine 264 carries an N-linked (GlcNAc...) asparagine glycan. The helical transmembrane segment at 271–290 (VITVMYTAVTPMLNPFIYSL) threads the bilayer. Residues 291 to 309 (RNRDMKAALRKLFNKRISS) lie on the Cytoplasmic side of the membrane.

The protein belongs to the G-protein coupled receptor 1 family.

It is found in the cell membrane. In terms of biological role, odorant receptor. This is Olfactory receptor 1A1 (OR1A1) from Homo sapiens (Human).